Consider the following 184-residue polypeptide: Bifunctional protein PyrR (184 aa).

Residues Val98–Thr110 carry the PRPP-binding motif.

The protein belongs to the purine/pyrimidine phosphoribosyltransferase family. PyrR subfamily.

The enzyme catalyses UMP + diphosphate = 5-phospho-alpha-D-ribose 1-diphosphate + uracil. In terms of biological role, regulates the transcription of the pyrimidine nucleotide (pyr) operon in response to exogenous pyrimidines. Functionally, also displays a weak uracil phosphoribosyltransferase activity which is not physiologically significant. This chain is Bifunctional protein PyrR, found in Roseiflexus castenholzii (strain DSM 13941 / HLO8).